The primary structure comprises 589 residues: Proline--tRNA ligase (589 aa).

Belongs to the class-II aminoacyl-tRNA synthetase family. ProS type 1 subfamily. In terms of assembly, homodimer.

Its subcellular location is the cytoplasm. The enzyme catalyses tRNA(Pro) + L-proline + ATP = L-prolyl-tRNA(Pro) + AMP + diphosphate. Its function is as follows. Catalyzes the attachment of proline to tRNA(Pro) in a two-step reaction: proline is first activated by ATP to form Pro-AMP and then transferred to the acceptor end of tRNA(Pro). As ProRS can inadvertently accommodate and process non-cognate amino acids such as alanine and cysteine, to avoid such errors it has two additional distinct editing activities against alanine. One activity is designated as 'pretransfer' editing and involves the tRNA(Pro)-independent hydrolysis of activated Ala-AMP. The other activity is designated 'posttransfer' editing and involves deacylation of mischarged Ala-tRNA(Pro). The misacylated Cys-tRNA(Pro) is not edited by ProRS. The sequence is that of Proline--tRNA ligase from Corynebacterium aurimucosum (strain ATCC 700975 / DSM 44827 / CIP 107346 / CN-1) (Corynebacterium nigricans).